The primary structure comprises 266 residues: L-aspartate dehydrogenase (266 aa).

Ala-123 and Asn-189 together coordinate NAD(+). His-219 is a catalytic residue.

It belongs to the L-aspartate dehydrogenase family.

The enzyme catalyses L-aspartate + NADP(+) + H2O = oxaloacetate + NH4(+) + NADPH + H(+). The catalysed reaction is L-aspartate + NAD(+) + H2O = oxaloacetate + NH4(+) + NADH + H(+). The protein operates within cofactor biosynthesis; NAD(+) biosynthesis; iminoaspartate from L-aspartate (dehydrogenase route): step 1/1. Specifically catalyzes the NAD or NADP-dependent dehydrogenation of L-aspartate to iminoaspartate. This chain is L-aspartate dehydrogenase, found in Cupriavidus necator (strain ATCC 17699 / DSM 428 / KCTC 22496 / NCIMB 10442 / H16 / Stanier 337) (Ralstonia eutropha).